The chain runs to 357 residues: (+)-eremophilene synthase (357 aa).

Residues Asp100 and Glu105 each coordinate Mg(2+). The short motif at 100–105 is the DDXXE motif element; sequence DDDFDE. A substrate-binding site is contributed by Arg198. 2 residues coordinate Mg(2+): Asn244 and Ser248. Lys251 provides a ligand contact to substrate. Position 252 (Asp252) interacts with Mg(2+). 331–332 lines the substrate pocket; the sequence is RY.

Belongs to the terpene synthase family. The cofactor is Mg(2+).

It carries out the reaction (2E,6E)-farnesyl diphosphate = (+)-eremophilene + diphosphate. It participates in secondary metabolite biosynthesis; terpenoid biosynthesis. In terms of biological role, catalyzes the conversion of (2E,6E)-farnesyl diphosphate (FPP) to yield the bicyclic sesquiterpene eremophilene via a 1,10-cyclization, which requires the abstraction of the pyrophosphate from FPP to yield the (E,E)-germacradienyl cation. The only accepted substrate is farnesyl diphosphate (FPP). The protein is (+)-eremophilene synthase of Gibberella fujikuroi (strain CBS 195.34 / IMI 58289 / NRRL A-6831) (Bakanae and foot rot disease fungus).